A 289-amino-acid polypeptide reads, in one-letter code: ATP synthase gamma chain (289 aa).

The protein belongs to the ATPase gamma chain family. F-type ATPases have 2 components, CF(1) - the catalytic core - and CF(0) - the membrane proton channel. CF(1) has five subunits: alpha(3), beta(3), gamma(1), delta(1), epsilon(1). CF(0) has three main subunits: a, b and c.

Its subcellular location is the cell inner membrane. Produces ATP from ADP in the presence of a proton gradient across the membrane. The gamma chain is believed to be important in regulating ATPase activity and the flow of protons through the CF(0) complex. The sequence is that of ATP synthase gamma chain from Erwinia tasmaniensis (strain DSM 17950 / CFBP 7177 / CIP 109463 / NCPPB 4357 / Et1/99).